The following is a 464-amino-acid chain: Protein phosphatase 2C homolog 2 (464 aa).

In terms of domain architecture, PPM-type phosphatase spans 23-292; it reads AFGLCAMQGW…DNMSIVVVAL (270 aa). 4 residues coordinate Mn(2+): Asp-62, Gly-63, Asp-234, and Asp-283. The interval 174–355 is interaction with IRE1; the sequence is DGFVEMDRVN…KPQDKFTRDH (182 aa). Disordered regions lie at residues 361–398 and 434–464; these read SVTA…TSGP and QLLQ…SHLQ. The span at 366-384 shows a compositional bias: acidic residues; sequence DNDDPMDIDDTDADTDAEN. Thr-376 and Thr-380 each carry phosphothreonine. A compositionally biased stretch (polar residues) spans 386 to 396; that stretch reads DPSSQSKSKTS. The span at 448–458 shows a compositional bias: basic and acidic residues; that stretch reads PENDSNTDHKA.

Belongs to the PP2C family. As to quaternary structure, interacts with IRE1 (when phosphorylated); the interaction is direct and serves to attenuate the endoplasmic reticulum unfolded protein response. Interacts (when phosphorylated) with RAD53 (via domain FHA 1); the interaction is direct and serves to regulate DNA damage checkpoint signaling. Interacts with the ATG17-ATG29-ATG31 and ATG1-ATG13 supercomplex; to regulate induction of autophagy. The cofactor is Mg(2+). Requires Mn(2+) as cofactor.

It is found in the nucleus. The protein resides in the cytoplasm. The protein localises to the cytosol. It catalyses the reaction O-phospho-L-seryl-[protein] + H2O = L-seryl-[protein] + phosphate. It carries out the reaction O-phospho-L-threonyl-[protein] + H2O = L-threonyl-[protein] + phosphate. In terms of biological role, dephosphorylating regulator for many key proteins. Dephosphorylates the cell cycle master regulator CDC28/cyclin-dependent kinase 1; its activity appears redundant with phosphatase PTC3. Dephosphorylates HOG1 at 'Thr-171', to attenuate activation of the stress-activated p38MAPK cascade; its activity appears redundant with phosphatase PTC3. Positively regulates both nonselective macroautophagy as well as the selective cytoplasm-to-vacuole (cvt) autophagy pathway and the genotoxin-induced targeted autophagy (GTA) pathway, possibly by dephosphorylating ATG13 to enable the interaction between the ATG17-ATG29-ATG31 and ATG1-ATG13 complexes; its activity appears redundant with phosphatase PTC3. Dephosphorylates RAD53, to regulate DNA damage checkpoint signaling. Dephosphorylates IRE1, to negatively regulate the endoplasmic reticulum unfolded protein response. This Saccharomyces cerevisiae (strain ATCC 204508 / S288c) (Baker's yeast) protein is Protein phosphatase 2C homolog 2 (PTC2).